We begin with the raw amino-acid sequence, 546 residues long: Tryptophan biosynthesis protein TrpCD (546 aa).

The segment at methionine 1 to lysine 226 is indole-3-glycerol phosphate synthase. The tract at residues methionine 227–methionine 546 is anthranilate phosphoribosyltransferase. 5-phospho-alpha-D-ribose 1-diphosphate is bound by residues glycine 295, glycine 298–aspartate 299, serine 303, asparagine 305–threonine 308, lysine 322–serine 330, and serine 334. Glycine 295 lines the anthranilate pocket. Mg(2+) is bound at residue serine 307. Asparagine 325 serves as a coordination point for anthranilate. Arginine 380 is a binding site for anthranilate. 2 residues coordinate Mg(2+): aspartate 437 and glutamate 438.

The protein in the N-terminal section; belongs to the TrpC family. This sequence in the C-terminal section; belongs to the anthranilate phosphoribosyltransferase family. Mg(2+) is required as a cofactor.

The catalysed reaction is 1-(2-carboxyphenylamino)-1-deoxy-D-ribulose 5-phosphate + H(+) = (1S,2R)-1-C-(indol-3-yl)glycerol 3-phosphate + CO2 + H2O. The enzyme catalyses N-(5-phospho-beta-D-ribosyl)anthranilate + diphosphate = 5-phospho-alpha-D-ribose 1-diphosphate + anthranilate. It participates in amino-acid biosynthesis; L-tryptophan biosynthesis; L-tryptophan from chorismate: step 2/5. Its pathway is amino-acid biosynthesis; L-tryptophan biosynthesis; L-tryptophan from chorismate: step 4/5. Its function is as follows. Bifunctional enzyme that catalyzes the second and fourth steps of tryptophan biosynthetic pathway. The second step is catalyzed by the anthranilate phosphoribosyltransferase, coded by the TrpD domain and the fourth step is catalyzed by indole-3-glycerol phosphate synthase, coded by the TrpC domain. This chain is Tryptophan biosynthesis protein TrpCD (trpCD), found in Archaeoglobus fulgidus (strain ATCC 49558 / DSM 4304 / JCM 9628 / NBRC 100126 / VC-16).